Here is a 341-residue protein sequence, read N- to C-terminus: DNA-directed RNA polymerase subunit alpha (341 aa).

The alpha N-terminal domain (alpha-NTD) stretch occupies residues 1–237 (MLSLSKNWNA…EQLQLFISFE (237 aa)). The tract at residues 252-341 (FSPYLLKRVD…LSKRYEDSYN (90 aa)) is alpha C-terminal domain (alpha-CTD).

It belongs to the RNA polymerase alpha chain family. Homodimer. The RNAP catalytic core consists of 2 alpha, 1 beta, 1 beta' and 1 omega subunit. When a sigma factor is associated with the core the holoenzyme is formed, which can initiate transcription.

It carries out the reaction RNA(n) + a ribonucleoside 5'-triphosphate = RNA(n+1) + diphosphate. In terms of biological role, DNA-dependent RNA polymerase catalyzes the transcription of DNA into RNA using the four ribonucleoside triphosphates as substrates. This is DNA-directed RNA polymerase subunit alpha from Rickettsia bellii (strain OSU 85-389).